The primary structure comprises 333 residues: MVREGEEHIDEEFSLGVIGVSYRETALQQREQVLQFLQQAQLSFYPKFPQEEGRSVLLSTCHRVELYGMATEAIFSTLEKEIREMGAIPYFYRNQDCFSHLFCVVGGMDSLVLGETEIQGQVKRAYLQAIEEQKLAFALHFLFQKALKEGKVFRTKRSSPSTEITIPAFVQHELQKQKMARSASLLFMGYSEINRSVAYYLQKQGFSRITFCSRQPLSLRSMDQVLREEVCFQDPYHVIFLGSSELRHAFPRSLWEGVWDFPGRLVFDFAVPRALPVQPACRDRYIDMEQISDWLRQHQKEVFPLQLDSLREVGYRYWESLNRRLARRRYASV.

Residues 60–63 (TCHR), Ser-110, 115–117 (ETE), and Gln-121 contribute to the substrate site. The Nucleophile role is filled by Cys-61. 189–194 (GYSEIN) contributes to the NADP(+) binding site.

The protein belongs to the glutamyl-tRNA reductase family. As to quaternary structure, homodimer.

It carries out the reaction (S)-4-amino-5-oxopentanoate + tRNA(Glu) + NADP(+) = L-glutamyl-tRNA(Glu) + NADPH + H(+). Its pathway is porphyrin-containing compound metabolism; protoporphyrin-IX biosynthesis; 5-aminolevulinate from L-glutamyl-tRNA(Glu): step 1/2. Functionally, catalyzes the NADPH-dependent reduction of glutamyl-tRNA(Glu) to glutamate 1-semialdehyde (GSA). This chain is Glutamyl-tRNA reductase, found in Chlamydia muridarum (strain MoPn / Nigg).